The following is a 421-amino-acid chain: Heterogeneous nuclear ribonucleoprotein 27C (421 aa).

RRM domains are found at residues 7-88 (GKLF…RTLQ) and 96-173 (YKVF…KAEP). 2 disordered regions span residues 171-191 (AEPR…GGAY) and 240-373 (GTSP…SEYD). The residue at position 177 (Ser177) is a Phosphoserine. Positions 240-250 (GTSPQQQQYGY) are enriched in polar residues. Positions 264-273 (PPGPQGPPPQ) are enriched in pro residues. Polar residues predominate over residues 275 to 284 (SNYAGPQQTQ). Over residues 293 to 302 (NSTSTGAPSG) the composition is skewed to low complexity. A phosphoserine mark is found at Ser366, Ser368, and Ser370. Tyr372 is modified (phosphotyrosine). Residue Ser379 is modified to Phosphoserine. The tract at residues 392-421 (EGASNYGAGPRSAYGNDSSTQPPYATSQAV) is disordered. The span at 406–421 (GNDSSTQPPYATSQAV) shows a compositional bias: polar residues.

In terms of assembly, interacts with sqd; the interaction is RNA-dependent and may be specific for sqd isoform A/sqdA. Interacts with otu; the interaction is RNA-independent.

The protein resides in the nucleus. It localises to the cytoplasm. Its function is as follows. This protein is a component of ribonucleosomes. Could be needed to organize a concentration gradient of a dorsalizing morphogen (Dm) originating in the germinal vesicle. Interacts with grk mRNA (via 3' UTR) and involved in its localization to the dorsal anterior region of the oocyte during dorsal-ventral axis determination; may function as a ribonuclear protein complex together with sqd and otu. Required for polytene chromosome dispersal in nurse cells during oogenesis. May be involved in the regulation of splicing. This is Heterogeneous nuclear ribonucleoprotein 27C from Drosophila melanogaster (Fruit fly).